Consider the following 319-residue polypeptide: MKKIAVLTSGGDVPGMNAAIRAVVRKAAFHGINVVGIKHGYEGLVKGYLEELDLGSVGGIIQRGGTHLNSARCPEFKEDAVQQQGIENLRAAGIEGLVVIGGDGSYRGAMDLVKKGFPAVGVPGTIDNDVPGTEYTIGFDTALNTVVESIDKIRDTATSHENSFIVEVMGRDAGDIALWAGLAAGAETVLIPEEDYDLDDIVARLDRGAARGKKHSIIIVAEGVMSGNELAKLIKEKTGKETRVSVLGHIQRGGSPTARDRVLASQFGAHAVELLMEGKYGRAVGIRNHQVIDYDMPEAFEKNHEADVSLYTLMKELSI.

An ATP-binding site is contributed by Gly-11. 21–25 contacts ADP; it reads RAVVR. Residues 72-73 and 102-105 contribute to the ATP site; these read RC and GDGS. Position 103 (Asp-103) interacts with Mg(2+). 125-127 lines the substrate pocket; it reads TID. Asp-127 (proton acceptor) is an active-site residue. Arg-154 lines the ADP pocket. 169–171 contacts substrate; it reads MGR. ADP is bound by residues 185–187, Arg-211, and 213–215; these read GAE and KKH. Residues Glu-222, Arg-243, and 249–252 contribute to the substrate site; that span reads HIQR.

This sequence belongs to the phosphofructokinase type A (PFKA) family. ATP-dependent PFK group I subfamily. Prokaryotic clade 'B1' sub-subfamily. As to quaternary structure, homotetramer. Mg(2+) is required as a cofactor.

The protein localises to the cytoplasm. It carries out the reaction beta-D-fructose 6-phosphate + ATP = beta-D-fructose 1,6-bisphosphate + ADP + H(+). Its pathway is carbohydrate degradation; glycolysis; D-glyceraldehyde 3-phosphate and glycerone phosphate from D-glucose: step 3/4. Its activity is regulated as follows. Allosterically activated by ADP and other diphosphonucleosides, and allosterically inhibited by phosphoenolpyruvate. Catalyzes the phosphorylation of D-fructose 6-phosphate to fructose 1,6-bisphosphate by ATP, the first committing step of glycolysis. This is ATP-dependent 6-phosphofructokinase from Lysinibacillus sphaericus (Bacillus sphaericus).